The following is a 118-amino-acid chain: MARVKKAMNARKKHKKILKLAKGFRGSRSKLYRPANTFVMKALKNAYIGRKLKKRDFRKLWIQRINAAARMNGISYSRLMNGLKLSGVEVNRKMLSEMAIQDPEGFAKLAEVAKAKLA.

This sequence belongs to the bacterial ribosomal protein bL20 family.

Functionally, binds directly to 23S ribosomal RNA and is necessary for the in vitro assembly process of the 50S ribosomal subunit. It is not involved in the protein synthesizing functions of that subunit. This chain is Large ribosomal subunit protein bL20, found in Clostridioides difficile (strain 630) (Peptoclostridium difficile).